The primary structure comprises 377 residues: NADP-dependent oxidoreductase lnbE (377 aa).

NADP(+)-binding positions include 170–173 (GGNG), 257–263 (LTNPRVS), and 293–295 (SPV).

The protein belongs to the NADP-dependent oxidoreductase L4BD family.

It participates in secondary metabolite biosynthesis. Functionally, NADP-dependent oxidoreductase; part of the lnb gene cluster that mediates the biosynthesis of diastereomeric piperazines. Lna and lnb clusters encode sets of enzymes that produce overlapping sets of previously undescribed metabolites such as piperazinomycin-like metabolites or morpholine. The lna and lnb biosynthetic pathways appear to be part of a signaling network that controls the formation of sclerotia, a resilient overwintering structure. One primary function of the non-canonical nonribosomal peptide synthetases lnaA and lnbA consists in the reduction of L-tyrosine. The presence in the clusters of tailoring enzymes such as the oxidoreductases lnaB, lnbB, lnaE or lnbE, as well as of the cytochrome P450 monooxygenases lnaC, lnaD, or lnbC, might explain formation of various diastereomeric piperazines. This chain is NADP-dependent oxidoreductase lnbE, found in Aspergillus flavus (strain ATCC 200026 / FGSC A1120 / IAM 13836 / NRRL 3357 / JCM 12722 / SRRC 167).